We begin with the raw amino-acid sequence, 115 residues long: Chondroitin proteoglycan 8 (115 aa).

The signal sequence occupies residues 1–16 (MRPFILLALLVSVTVA). The interval 33 to 96 (VRRTTRDASD…GSGAAEVTSV (64 aa)) is disordered. 5 O-linked (Xyl...) (chondroitin sulfate) serine glycosylation sites follow: Ser61, Ser63, Ser84, Ser88, and Ser109.

The polypeptide is Chondroitin proteoglycan 8 (Caenorhabditis elegans).